We begin with the raw amino-acid sequence, 432 residues long: Adenosylhomocysteinase (432 aa).

T56, D131, and E156 together coordinate substrate. 157-159 (TTT) lines the NAD(+) pocket. Substrate contacts are provided by K186 and D190. NAD(+) contacts are provided by residues N191, 222-227 (GDVGKG), E243, 299-301 (IGH), and N346.

Belongs to the adenosylhomocysteinase family. Requires NAD(+) as cofactor.

The enzyme catalyses S-adenosyl-L-homocysteine + H2O = L-homocysteine + adenosine. It participates in amino-acid biosynthesis; L-homocysteine biosynthesis; L-homocysteine from S-adenosyl-L-homocysteine: step 1/1. Functionally, adenosylhomocysteine is a competitive inhibitor of S-adenosyl-L-methionine-dependent methyl transferase reactions; therefore adenosylhomocysteinase may play a key role in the control of methylations via regulation of the intracellular concentration of adenosylhomocysteine. The sequence is that of Adenosylhomocysteinase (Ahcy13) from Anopheles gambiae (African malaria mosquito).